The sequence spans 88 residues: MMSKMGAMFVLLLLFTLASSQQEGDVQARKTRPKSDFYRALPRSGSTCTCFTSTNCQGSCECLSPPGCYCSNNGIRQPGCSCTCPGTG.

Positions 1–20 (MMSKMGAMFVLLLLFTLASS) are cleaved as a signal peptide. A propeptide spanning residues 21–43 (QQEGDVQARKTRPKSDFYRALPR) is cleaved from the precursor. Residue threonine 87 is modified to Threonine amide.

Belongs to the conotoxin S superfamily. Contains 5 disulfide bonds. In terms of processing, the predominant peptide contains 2 hydroxyprolines, while 2 minor peptides contains 1 and 3 hydroxyprolines. Expressed by the venom duct.

It is found in the secreted. Functionally, alpha-conotoxins act on postsynaptic membranes, they bind to the nicotinic acetylcholine receptors (nAChR) and thus inhibit them. This toxin shows high activity on alpha-9-alpha-10 (CHRNA9-CHRNA10) (IC(50)=9.79 nM). It also shows weak activity on alpha-3-beta-2 (CHRNA3-CHRNB2) (IC(50)~1 uM), alpha-6/alpha-3-beta-2-beta-3 (CHRNA6/CHRNA3-CHRNB2-CHRNB3) (IC(50)~1 uM). The toxin binds to the same or overlapping binding sites than conotoxin RgIA (AC P0C1D0). The protein is Alpha-conotoxin GVIIIB of Conus geographus (Geography cone).